Reading from the N-terminus, the 74-residue chain is MDLSKRSAENVAYMIEQLKQKLKVLNLDAIKPSHFSEEWYDELRDIYEMVMKRETFSPSEMQAIVEELGSLRKK.

It belongs to the UPF0435 family.

The protein is UPF0435 protein GK0418 of Geobacillus kaustophilus (strain HTA426).